The chain runs to 768 residues: Levansucrase (768 aa).

The first 36 residues, 1–36 (MLENKKHKKMSLSGKSLLMGTLSTAAIVLSASTVNA), serve as a signal peptide directing secretion. Composition is skewed to polar residues over residues 57-68 (SASVNKNDNSGL), 80-99 (TETN…SQVN), 106-134 (SSTQ…QDSD), and 143-153 (NNSQGQSSTSS). The disordered stretch occupies residues 57–158 (SASVNKNDNS…SSTSSEKTEL (102 aa)). Tryptophan 250, aspartate 251, and serine 320 together coordinate sucrose. Catalysis depends on aspartate 251, which acts as the Nucleophile. Residue aspartate 398 coordinates Ca(2+). Residues arginine 403 and aspartate 404 each contribute to the sucrose site. The Ca(2+) site is built by glutamine 429, asparagine 468, and aspartate 502. Glutamate 503 is a binding site for sucrose. Residue glutamate 505 is the Proton donor/acceptor of the active site. Arginine 523 is a binding site for sucrose. Residues 688-736 (HQPVTPNVPTTPEKPENPTTPNTPDTPRTPEVPTTPVKKTTQSELPKAG) are disordered. Over residues 691–727 (VTPNVPTTPEKPENPTTPNTPDTPRTPEVPTTPVKKT) the composition is skewed to low complexity. An LPXTG sorting signal motif is present at residues 732-736 (LPKAG). Alanine 735 is modified (pentaglycyl murein peptidoglycan amidated alanine). A propeptide spans 736-768 (GAKDGIAATILGAISSMLGVIGLAGISKRKRNN) (removed by sortase).

This sequence belongs to the glycosyl hydrolase 68 family.

It localises to the secreted. It is found in the cell wall. The protein localises to the cell surface. It catalyses the reaction [6)-beta-D-fructofuranosyl-(2-&gt;](n) alpha-D-glucopyranoside + sucrose = [6)-beta-D-fructofuranosyl-(2-&gt;](n+1) alpha-D-glucopyranoside + D-glucose. Its activity is regulated as follows. Calcium ions are required for optimal activity, but do not seem to be essential since addition of EDTA causes only a 48% drop in activity. Ca(2+) may play an important structural role and promote stability of levansucrase. In terms of biological role, fructosyltransferase that catalyzes the polymerization of the fructose moiety of sucrose to produce levan polymer and the fructo-oligosaccharide (FOS) 1-kestose. Is also able to convert raffinose into a fructan polymer and a single oligosaccharide (most likely Gal-Glc-Frc-Frc) in vitro; however, L.gasseri strain DSM 20077 is unable to ferment raffinose. Also displays sucrose hydrolase activity. The protein is Levansucrase of Lactobacillus gasseri.